A 351-amino-acid polypeptide reads, in one-letter code: MKAYAMLKIGATGWIEKPRPVCGPNDAIIRPLAVAPCTSDVHTVWEGGIGERHNMVLGHEGCGVVDEVGSEVKSFKVGDRVLVAAITPEWNSVNAQAGYPMHSGGMLGGWKFSNVKDGMFAEYFHVNDAEGNLALMPEGMDLADACMLSDMIPTGFHANELADIQYGVALSFFCAGPVGLMAIAGAALKGAGRIIVVDSRPDIVEIAKAYGATDYIDFKKVSVVDEILKWTNNEGVEKVLISGGGSTILETAIKVLRPGGKIGNVNYFGAGEFLTIPRVEWGVGMAHKAIHGGLMLGGRLRLEKLARLIMTKKLDPSKMITHRFKGFEHIEEALFLMKDKPKDLIKSVVIF.

The Zn(2+) site is built by C37, H59, E60, and D150. Residues 175–178 (AGPV), 198–200 (DSR), 265–267 (VNY), and K340 contribute to the NADP(+) site.

This sequence belongs to the zinc-containing alcohol dehydrogenase family. Requires Zn(2+) as cofactor.

It catalyses the reaction propan-2-ol + NADP(+) = acetone + NADPH + H(+). Alcohol dehydrogenase with a preference for medium chain secondary alcohols, such as 2-butanol and isopropanol. Has very low activity with primary alcohols, such as ethanol. Under physiological conditions, the enzyme reduces aldehydes and 2-ketones to produce secondary alcohols. Is also active with acetaldehyde and propionaldehyde. This Mycoplasma pneumoniae (strain ATCC 29342 / M129 / Subtype 1) (Mycoplasmoides pneumoniae) protein is Probable NADP-dependent isopropanol dehydrogenase (adh).